Consider the following 245-residue polypeptide: 3-deoxy-manno-octulosonate cytidylyltransferase (245 aa).

This sequence belongs to the KdsB family.

Its subcellular location is the cytoplasm. It carries out the reaction 3-deoxy-alpha-D-manno-oct-2-ulosonate + CTP = CMP-3-deoxy-beta-D-manno-octulosonate + diphosphate. The protein operates within nucleotide-sugar biosynthesis; CMP-3-deoxy-D-manno-octulosonate biosynthesis; CMP-3-deoxy-D-manno-octulosonate from 3-deoxy-D-manno-octulosonate and CTP: step 1/1. It participates in bacterial outer membrane biogenesis; lipopolysaccharide biosynthesis. In terms of biological role, activates KDO (a required 8-carbon sugar) for incorporation into bacterial lipopolysaccharide in Gram-negative bacteria. The chain is 3-deoxy-manno-octulosonate cytidylyltransferase from Rhodopseudomonas palustris (strain BisB5).